The chain runs to 360 residues: Peptide chain release factor 1 (360 aa).

An N5-methylglutamine modification is found at Q235. Residues 281–310 form a disordered region; sequence AERQRQDAAQAESRRLQVGSGDRSQRIRTY.

The protein belongs to the prokaryotic/mitochondrial release factor family. Post-translationally, methylated by PrmC. Methylation increases the termination efficiency of RF1.

The protein resides in the cytoplasm. Peptide chain release factor 1 directs the termination of translation in response to the peptide chain termination codons UAG and UAA. The protein is Peptide chain release factor 1 of Stenotrophomonas maltophilia (strain R551-3).